We begin with the raw amino-acid sequence, 65 residues long: Crotamine (65 aa).

An N-terminal signal peptide occupies residues 1–22; it reads MKILYLLFAFLFLAFLSEPGNA. Short sequence motifs (nuclear localization signal) lie at residues 24 to 40 and 49 to 61; these read KQCH…EKIC and KMDC…CCKK. Intrachain disulfides connect C26–C58, C33–C52, and C40–C59.

Belongs to the crotamine-myotoxin family. As to quaternary structure, monomer. As to expression, expressed by the venom gland.

The protein resides in the secreted. Its function is as follows. Cationic peptide that possesses multiple functions. It acts as a cell-penetrating peptide (CPP), and as a potent voltage-gated potassium channel inhibitor. It exhibits antimicrobial activities, hind limb paralysis, and severe muscle necrosis by a non-enzymatic mechanism. As a cell-penetrating peptide, crotamine has high specificity for actively proliferating cells, and interacts inside the cell with subcellular and subnuclear structures, like vesicular compartments, chromosomes and centrioles. It penetrates into the cells as fast as five minutes after its addition to cell culture medium. In vivo, after intraperitoneal administration, it is found in cells of peritoneal fluid and bone marrow, demonstrating preferential nuclear and perinuclear localization. To enter the cell, it interacts with the chains of heparan sulfate membrane proteoglycan (HSPG), and is endocytosed (in complex with HSPG) in vesicles which are transported into the cell with the help of clathrin. Inside the cell, crotamine accumulates in lysosomal vesicles. As soon as the peptide accumulates in endosomes/lysosomes vesicles, these compartments are disrupted and their contents released into the cytosol. This loss of lysosomal content induces cell death at high concentrations, or promotes the distribution of crotamine in cytoplasmic compartments, which is a step before crotamine nuclear uptake. As a potassium channel inhibitor, this toxin selectively inhibits Kv1.1/KCNA1, Kv1.2/KCNA2 and Kv1.3/KCNA3 channels with an IC(50) of 369, 386 and 287 nM, respectively. The inhibition of Kv1.3/KCNA channels induced by this toxin occurs rapidly and is voltage-independent. The channel inhibition is reversible after washing, suggesting a pure and classical channel blockage effect, without effects in potassium channel kinetics. As an antimicrobial peptide, crotamine shows antibacterial activity against E.coli and B.subtilis, and antifungal activity against Candida spp., Trichosporon spp. and C.neoformans. It kills bacteria through membrane permeabilization. This is Crotamine (CRO2) from Crotalus durissus terrificus (South American rattlesnake).